The primary structure comprises 440 residues: Transposon Ty1-ER2 Gag polyprotein (440 aa).

Polar residues-rich tracts occupy residues 1-10 (MESQQLSNYP), 48-60 (TKAN…TPAS), and 127-152 (QSQF…GNTF). 3 disordered regions span residues 1-93 (MESQ…MMTQ), 126-173 (PQSQ…RPPP), and 352-440 (GSRN…PETY). Residues 153–165 (TDSSSADSDMTST) show a composition bias toward low complexity. The segment at 299 to 401 (NNGIHINNKV…NSKSKTARAH (103 aa)) is RNA-binding. Low complexity predominate over residues 402–418 (NVSTSNNSPSTDNDSIS). Residue S416 is modified to Phosphoserine. A compositionally biased stretch (polar residues) spans 419-428 (KSTTEPIQLN). Over residues 429–440 (NKHDLHLRPETY) the composition is skewed to basic and acidic residues.

As to quaternary structure, homotrimer.

It localises to the cytoplasm. Its function is as follows. Capsid protein (CA) is the structural component of the virus-like particle (VLP), forming the shell that encapsulates the retrotransposons dimeric RNA genome. The particles are assembled from trimer-clustered units and there are holes in the capsid shells that allow for the diffusion of macromolecules. CA also has nucleocapsid-like chaperone activity, promoting primer tRNA(i)-Met annealing to the multipartite primer-binding site (PBS), dimerization of Ty1 RNA and initiation of reverse transcription. The polypeptide is Transposon Ty1-ER2 Gag polyprotein (TY1A-ER2) (Saccharomyces cerevisiae (strain ATCC 204508 / S288c) (Baker's yeast)).